The chain runs to 117 residues: Large ribosomal subunit protein bL19 (117 aa).

The protein belongs to the bacterial ribosomal protein bL19 family.

In terms of biological role, this protein is located at the 30S-50S ribosomal subunit interface and may play a role in the structure and function of the aminoacyl-tRNA binding site. The protein is Large ribosomal subunit protein bL19 of Azobacteroides pseudotrichonymphae genomovar. CFP2.